The sequence spans 32 residues: Snake venom serine proteinase (32 aa).

The Peptidase S1 domain maps to 1 to 32 (VIGGDECDINEHRFLVFLTXASGLACGGTLIN).

This sequence belongs to the peptidase S1 family. Snake venom subfamily. In terms of assembly, monomer. Contains 6 disulfide bonds. Post-translationally, glycosylated. In terms of tissue distribution, expressed by the venom gland.

Its subcellular location is the secreted. Functionally, cleaves a kininogen analog with the release of kallidin (lysyl-bradykinin). Completely cleaves fibrinogen Aalpha chain, partially cleaves Bbeta chain and has no activity on gamma chain. The chain is Snake venom serine proteinase from Bitis arietans (African puff adder).